Here is a 152-residue protein sequence, read N- to C-terminus: MALTEKQEALLKQSWEVLKQNIPAHSLRLFALIIEAAPESKYVFSFLKDSNEIPENNPKLKAHAAVIFKTICESATELRQKGHAVWDNNTLKRLGSIHLKNKITDPHFEVMKGALLGTIKEAIKENWSDEMGQAWTEAYNQLVATIKAEMKE.

One can recognise a Globin domain in the interval A2 to K151. A Homodimerization motif is present at residues E35 to E39. Heme b-binding residues include S45, K59, H63, R93, and H98. The Homodimerization signature appears at D105–G117.

This sequence belongs to the plant globin family. Homodimer. Requires heme b as cofactor. In terms of tissue distribution, root nodules.

It is found in the cytoplasm. Its subcellular location is the nucleus. It carries out the reaction Fe(III)-heme b-[protein] + nitric oxide + H2O = Fe(II)-heme b-[protein] + nitrite + 2 H(+). Phytoglobin that reduces nitrite to nitric oxide (NO) under anoxic conditions (e.g. during flooding or in waterlogged soil) and upon root nodulation. Required for general plant development and during nodulation, especially for the onset of symbiosis. Monitors nitric oxide (NO) levels during early phase of the nitrogen-fixing symbiosis and buffers oxygen in functioning nodules. May not function as an oxygen storage or transport protein. Has an unusually high affinity for O(2) through a hexacoordinate heme iron because of a very low dissociation constant. The sequence is that of Anaerobic nitrite reductase HBI from Casuarina glauca (Swamp oak).